The chain runs to 436 residues: G2/mitotic-specific cyclin-B (436 aa).

Residues methionine 1–serine 17 show a composition bias toward polar residues. Residues methionine 1–serine 33 form a disordered region.

Belongs to the cyclin family. Cyclin AB subfamily. Interacts with the cdk1 protein kinase to form a serine/threonine kinase holoenzyme complex also known as maturation promoting factor (MPF). The cyclin subunit imparts substrate specificity to the complex.

Its function is as follows. Essential for the control of the cell cycle at the G2/M (mitosis) transition. The polypeptide is G2/mitotic-specific cyclin-B (cycB) (Dictyostelium discoideum (Social amoeba)).